The sequence spans 378 residues: Probable mannosyltransferase MNT3 (378 aa).

At 1–4 the chain is on the cytoplasmic side; it reads MLWH. A helical; Signal-anchor for type II membrane protein transmembrane segment spans residues 5–25; it reads LVFILIAILLLTFSPKIESLF. The Lumenal segment spans residues 26-378; sequence KSFTINKPTK…TNHFLNILHN (353 aa). N-linked (GlcNAc...) asparagine glycans are attached at residues Asn-73 and Asn-149.

The protein belongs to the glycosyltransferase 15 family.

The protein resides in the membrane. Transfers an alpha-D-mannosyl residue from GDP-mannose into lipid-linked oligosaccharide, forming an alpha-(1-&gt;2)-D-mannosyl-D-mannose linkage. The polypeptide is Probable mannosyltransferase MNT3 (MNT3) (Candida albicans (strain SC5314 / ATCC MYA-2876) (Yeast)).